The primary structure comprises 229 residues: Heptaprenylglyceryl phosphate synthase (229 aa).

A sn-glycerol 1-phosphate-binding site is contributed by Lys-12. Positions 14 and 40 each coordinate Mg(2+). Sn-glycerol 1-phosphate is bound by residues 159–164 (YLEYSG), Gly-189, and 209–210 (GN).

This sequence belongs to the GGGP/HepGP synthase family. Group I subfamily. In terms of assembly, homodimer. Mg(2+) is required as a cofactor.

It carries out the reaction sn-glycerol 1-phosphate + all-trans-heptaprenyl diphosphate = 3-heptaprenyl-sn-glycero-1-phosphate + diphosphate. Its pathway is membrane lipid metabolism; glycerophospholipid metabolism. In terms of biological role, prenyltransferase that catalyzes in vivo the transfer of the heptaprenyl moiety of heptaprenyl pyrophosphate (HepPP; 35 carbon atoms) to the C3 hydroxyl of sn-glycerol-1-phosphate (G1P), producing heptaprenylglyceryl phosphate (HepGP). This reaction is an ether-bond-formation step in the biosynthesis of archaea-type G1P-based membrane lipids found in Bacillales. The protein is Heptaprenylglyceryl phosphate synthase of Bacillus mycoides (strain KBAB4) (Bacillus weihenstephanensis).